The sequence spans 175 residues: Sec-independent protein translocase protein TatB (175 aa).

Residues 1–21 form a helical membrane-spanning segment; the sequence is MLDLGLSKMALIGVVALVVLG. Positions 96 to 115 are enriched in low complexity; the sequence is VSPGGSAAADAPDGPSAASG. Disordered stretches follow at residues 96 to 119 and 152 to 175; these read VSPGGSAAADAPDGPSAASGEPSW and QVQSGAARVARHRPASLRRPARFL. Over residues 160-175 the composition is skewed to basic residues; the sequence is VARHRPASLRRPARFL.

This sequence belongs to the TatB family. As to quaternary structure, the Tat system comprises two distinct complexes: a TatABC complex, containing multiple copies of TatA, TatB and TatC subunits, and a separate TatA complex, containing only TatA subunits. Substrates initially bind to the TatABC complex, which probably triggers association of the separate TatA complex to form the active translocon.

It is found in the cell inner membrane. In terms of biological role, part of the twin-arginine translocation (Tat) system that transports large folded proteins containing a characteristic twin-arginine motif in their signal peptide across membranes. Together with TatC, TatB is part of a receptor directly interacting with Tat signal peptides. TatB may form an oligomeric binding site that transiently accommodates folded Tat precursor proteins before their translocation. The polypeptide is Sec-independent protein translocase protein TatB (Burkholderia pseudomallei (strain 1710b)).